Consider the following 373-residue polypeptide: Cell division protein FtsZ 1 (373 aa).

GTP-binding positions include 51-55, 138-140, Glu-169, Arg-173, and Asp-216; these read GAGCN and GTG. Positions 354–373 are disordered; the sequence is EESYFGEEERRPIKLDLDEL. A compositionally biased stretch (basic and acidic residues) spans 360-373; it reads EEERRPIKLDLDEL.

The protein belongs to the FtsZ family. Homodimer. Polymerizes to form a dynamic ring structure in a strictly GTP-dependent manner. Interacts directly with several other division proteins.

The protein localises to the cytoplasm. Essential cell division protein that forms a contractile ring structure (Z ring) at the future cell division site. The regulation of the ring assembly controls the timing and the location of cell division. One of the functions of the FtsZ ring is to recruit other cell division proteins to the septum to produce a new cell wall between the dividing cells. Binds GTP and shows GTPase activity. The sequence is that of Cell division protein FtsZ 1 from Thermococcus kodakarensis (strain ATCC BAA-918 / JCM 12380 / KOD1) (Pyrococcus kodakaraensis (strain KOD1)).